The chain runs to 321 residues: Lipoyl synthase (321 aa).

Cys-68, Cys-73, Cys-79, Cys-94, Cys-98, Cys-101, and Ser-308 together coordinate [4Fe-4S] cluster. Residues 80-297 (FNHGTATFMI…KVIAEDLGFS (218 aa)) form the Radical SAM core domain.

It belongs to the radical SAM superfamily. Lipoyl synthase family. The cofactor is [4Fe-4S] cluster.

The protein resides in the cytoplasm. It carries out the reaction [[Fe-S] cluster scaffold protein carrying a second [4Fe-4S](2+) cluster] + N(6)-octanoyl-L-lysyl-[protein] + 2 oxidized [2Fe-2S]-[ferredoxin] + 2 S-adenosyl-L-methionine + 4 H(+) = [[Fe-S] cluster scaffold protein] + N(6)-[(R)-dihydrolipoyl]-L-lysyl-[protein] + 4 Fe(3+) + 2 hydrogen sulfide + 2 5'-deoxyadenosine + 2 L-methionine + 2 reduced [2Fe-2S]-[ferredoxin]. It functions in the pathway protein modification; protein lipoylation via endogenous pathway; protein N(6)-(lipoyl)lysine from octanoyl-[acyl-carrier-protein]: step 2/2. Functionally, catalyzes the radical-mediated insertion of two sulfur atoms into the C-6 and C-8 positions of the octanoyl moiety bound to the lipoyl domains of lipoate-dependent enzymes, thereby converting the octanoylated domains into lipoylated derivatives. The protein is Lipoyl synthase of Shewanella amazonensis (strain ATCC BAA-1098 / SB2B).